The sequence spans 157 residues: Transcriptional regulator AzlB (157 aa).

An HTH asnC-type domain is found at 5-66 (LDETDKAILR…IVDEKKLGIE (62 aa)). The segment at residues 24–43 (NLNLSKKIGLSPSACLARTK) is a DNA-binding region (H-T-H motif).

Functionally, transcriptional repressor of the azlBCD operon involved in branched-chain amino acid transport. The protein is Transcriptional regulator AzlB (azlB) of Bacillus subtilis (strain 168).